The primary structure comprises 162 residues: Peptidyl-prolyl cis-trans isomerase-like 1 (162 aa).

In terms of domain architecture, PPIase cyclophilin-type spans 1–155 (MTTNIVLETT…EEVKIVKARV (155 aa)).

It belongs to the cyclophilin-type PPIase family. PPIL1 subfamily.

It carries out the reaction [protein]-peptidylproline (omega=180) = [protein]-peptidylproline (omega=0). Its function is as follows. PPIases accelerate the folding of proteins. It catalyzes the cis-trans isomerization of proline imidic peptide bonds in oligopeptides. This Gibberella zeae (strain ATCC MYA-4620 / CBS 123657 / FGSC 9075 / NRRL 31084 / PH-1) (Wheat head blight fungus) protein is Peptidyl-prolyl cis-trans isomerase-like 1 (CYP1).